The following is a 238-amino-acid chain: Flagellar L-ring protein (238 aa).

The first 16 residues, 1-16, serve as a signal peptide directing secretion; sequence MNKAILAVAMVLLLAG. A lipid anchor (N-palmitoyl cysteine) is attached at cysteine 17. The S-diacylglycerol cysteine moiety is linked to residue cysteine 17.

It belongs to the FlgH family. In terms of assembly, the basal body constitutes a major portion of the flagellar organelle and consists of four rings (L,P,S, and M) mounted on a central rod.

It is found in the cell outer membrane. It localises to the bacterial flagellum basal body. Its function is as follows. Assembles around the rod to form the L-ring and probably protects the motor/basal body from shearing forces during rotation. The polypeptide is Flagellar L-ring protein (Brucella abortus (strain 2308)).